The chain runs to 162 residues: Austinoid biosynthesis clusters protein J (162 aa).

This sequence belongs to the trt14 isomerase family. As to quaternary structure, homodimer.

It participates in secondary metabolite biosynthesis; terpenoid biosynthesis. Part of the gene cluster B that mediates the biosynthesis of austinol and dehydroaustinol, two fungal meroterpenoids. The first step of the pathway is the synthesis of 3,5-dimethylorsellinic acid by the polyketide synthase ausA. 3,5-dimethylorsellinic acid is then prenylated by the polyprenyl transferase ausN. Further epoxidation by the FAD-dependent monooxygenase ausM and cyclization by the probable terpene cyclase ausL lead to the formation of protoaustinoid A. Protoaustinoid A is then oxidized to spiro-lactone preaustinoid A3 by the combined action of the FAD-binding monooxygenases ausB and ausC, and the dioxygenase ausE. Acid-catalyzed keto-rearrangement and ring contraction of the tetraketide portion of preaustinoid A3 by ausJ lead to the formation of preaustinoid A4. The aldo-keto reductase ausK, with the help of ausH, is involved in the next step by transforming preaustinoid A4 into isoaustinone which is in turn hydroxylated by the P450 monooxygenase ausI to form austinolide. Finally, the cytochrome P450 monooxygenase ausG modifies austinolide to austinol. Austinol can be further modified to dehydroaustinol which forms a diffusible complex with diorcinol that initiates conidiation. Due to genetic rearrangements of the clusters and the subsequent loss of some enzymes, the end products of the Emericella nidulans austinoid biosynthesis clusters are austinol and dehydroaustinol, even if additional enzymes, such as the O-acetyltransferase ausQ and the cytochrome P450 monooxygenase ausR are still functional. The protein is Austinoid biosynthesis clusters protein J of Emericella nidulans (strain FGSC A4 / ATCC 38163 / CBS 112.46 / NRRL 194 / M139) (Aspergillus nidulans).